Here is a 51-residue protein sequence, read N- to C-terminus: Toxin CSTX-18 (51 aa).

4 cysteine pairs are disulfide-bonded: cysteine 9-cysteine 22, cysteine 14-cysteine 27, cysteine 21-cysteine 36, and cysteine 29-cysteine 34.

In terms of processing, contains 4 disulfide bonds. In terms of tissue distribution, expressed by the venom gland.

The protein localises to the secreted. The polypeptide is Toxin CSTX-18 (Cupiennius salei (American wandering spider)).